Reading from the N-terminus, the 56-residue chain is Large ribosomal subunit protein bL32 (56 aa).

A disordered region spans residues 1-36 (MAVQQNKKSRSKRGMRRSHDALSTAQLSVDATSGEV). Positions 7–16 (KKSRSKRGMR) are enriched in basic residues. Residues 21 to 31 (ALSTAQLSVDA) are compositionally biased toward polar residues.

It belongs to the bacterial ribosomal protein bL32 family.

This Shewanella oneidensis (strain ATCC 700550 / JCM 31522 / CIP 106686 / LMG 19005 / NCIMB 14063 / MR-1) protein is Large ribosomal subunit protein bL32.